Reading from the N-terminus, the 400-residue chain is ATP-dependent rRNA helicase RRP3 (400 aa).

A Q motif motif is present at residues 1-29 (MEFGDLRIDESLIKTCQEKGITRPTEVQR). Positions 32–202 (IPAVLGGGDV…SSILKRPKTI (171 aa)) constitute a Helicase ATP-binding domain. An ATP-binding site is contributed by 45 to 52 (SQTGSGKT). The short motif at 150–153 (DEAD) is the DEAD box element. Residues 229–373 (ALVELLEMSQ…EFKMMKKNFG (145 aa)) enclose the Helicase C-terminal domain.

The protein belongs to the DEAD box helicase family. DDX47/RRP3 subfamily. Interacts with the SSU processome.

It localises to the nucleus. The catalysed reaction is ATP + H2O = ADP + phosphate + H(+). Functionally, ATP-dependent rRNA helicase required for pre-ribosomal RNA processing. Involved in the maturation of the 35S-pre-rRNA and to its cleavage to mature 18S rRNA. This Encephalitozoon cuniculi (strain GB-M1) (Microsporidian parasite) protein is ATP-dependent rRNA helicase RRP3.